The following is a 431-amino-acid chain: Adenylosuccinate synthetase (431 aa).

GTP contacts are provided by residues 13 to 19 (GDEGKGK) and 41 to 43 (GHT). Residue Asp-14 is the Proton acceptor of the active site. Mg(2+) is bound by residues Asp-14 and Gly-41. IMP is bound by residues 14–17 (DEGK), 39–42 (NAGH), Thr-130, Arg-144, Gln-225, Thr-240, and Arg-304. His-42 functions as the Proton donor in the catalytic mechanism. 300 to 306 (AVTGRPR) is a binding site for substrate. Residues Arg-306, 332-334 (KLD), and 415-417 (STG) contribute to the GTP site.

Belongs to the adenylosuccinate synthetase family. As to quaternary structure, homodimer. It depends on Mg(2+) as a cofactor.

The protein localises to the cytoplasm. The enzyme catalyses IMP + L-aspartate + GTP = N(6)-(1,2-dicarboxyethyl)-AMP + GDP + phosphate + 2 H(+). The protein operates within purine metabolism; AMP biosynthesis via de novo pathway; AMP from IMP: step 1/2. Plays an important role in the de novo pathway of purine nucleotide biosynthesis. Catalyzes the first committed step in the biosynthesis of AMP from IMP. This is Adenylosuccinate synthetase from Legionella pneumophila (strain Lens).